The sequence spans 349 residues: Isopentenyl-diphosphate delta-isomerase (349 aa).

9 to 10 (RK) serves as a coordination point for substrate. Residues 65 to 67 (AMT), S95, and N124 each bind FMN. 95-97 (STH) is a binding site for substrate. Q154 serves as a coordination point for substrate. Mg(2+) is bound at residue E155. Residues K186, S211, T216, 262 to 264 (GLR), and 283 to 284 (SR) contribute to the FMN site.

It belongs to the IPP isomerase type 2 family. As to quaternary structure, homooctamer. Dimer of tetramers. The cofactor is FMN. Requires NADPH as cofactor. It depends on Mg(2+) as a cofactor.

It localises to the cytoplasm. The enzyme catalyses isopentenyl diphosphate = dimethylallyl diphosphate. Involved in the biosynthesis of isoprenoids. Catalyzes the 1,3-allylic rearrangement of the homoallylic substrate isopentenyl (IPP) to its allylic isomer, dimethylallyl diphosphate (DMAPP). This chain is Isopentenyl-diphosphate delta-isomerase, found in Staphylococcus aureus.